The following is a 620-amino-acid chain: Cilia- and flagella-associated protein 52 (620 aa).

WD repeat units lie at residues 62 to 106 (GHGN…LIAR), 109 to 150 (LHKG…AICG), 156 to 195 (LNVG…RKIW), 288 to 327 (QLQG…ETLI), 330 to 369 (CHFE…ELLR), 372 to 411 (VPNM…LMYT), 415 to 454 (AHRI…QKLE), 459 to 498 (EHKS…RNQM), 500 to 541 (LANT…RELE), 543 to 582 (SLSG…VTHV), and 585 to 620 (GHSG…PFAS).

It belongs to the CFAP52 family. Microtubule inner protein component of sperm flagellar doublet microtubules. Interacts with BRCA2. Interacts with the CCT chaperonin complex. Interacts with HSP70. Interacts with AK8. Interacts with CFAP45. Interacts with DNAI1. Interacts with IQDC.

The protein resides in the cytoplasm. Its subcellular location is the cytoskeleton. The protein localises to the cilium axoneme. It localises to the flagellum axoneme. Functionally, microtubule inner protein (MIP) part of the dynein-decorated doublet microtubules (DMTs) in cilia axoneme. Important for proper ciliary and flagellar beating. May act in cooperation with CFAP45 and axonemal dynein subunit DNAH11. May play a role in cell growth and/or survival. The chain is Cilia- and flagella-associated protein 52 from Mus musculus (Mouse).